Reading from the N-terminus, the 359-residue chain is 3-dehydroquinate synthase (359 aa).

NAD(+)-binding positions include 69 to 74 (DAETGK), 103 to 107 (GAATD), 127 to 128 (TT), K140, and K149. Residues E182, H244, and H260 each contribute to the Zn(2+) site.

Belongs to the sugar phosphate cyclases superfamily. Dehydroquinate synthase family. Co(2+) is required as a cofactor. Requires Zn(2+) as cofactor. The cofactor is NAD(+).

It is found in the cytoplasm. It catalyses the reaction 7-phospho-2-dehydro-3-deoxy-D-arabino-heptonate = 3-dehydroquinate + phosphate. The protein operates within metabolic intermediate biosynthesis; chorismate biosynthesis; chorismate from D-erythrose 4-phosphate and phosphoenolpyruvate: step 2/7. Functionally, catalyzes the conversion of 3-deoxy-D-arabino-heptulosonate 7-phosphate (DAHP) to dehydroquinate (DHQ). This chain is 3-dehydroquinate synthase, found in Corynebacterium diphtheriae (strain ATCC 700971 / NCTC 13129 / Biotype gravis).